The chain runs to 676 residues: ATP-dependent RNA helicase dbp-9 (676 aa).

The segment at Met1–Phe97 is disordered. Basic and acidic residues predominate over residues Gln70 to Lys90. The short motif at Leu95 to Arg123 is the Q motif element. Positions Ile126–Met304 constitute a Helicase ATP-binding domain. Residue Ala139–Thr146 coordinates ATP. Positions Asp251 to Asp254 match the DEAD box motif. One can recognise a Helicase C-terminal domain in the interval Lys317 to Glu541. Basic and acidic residues predominate over residues Glu410–Asn432. Disordered stretches follow at residues Glu410–Gln444 and Phe633–Lys676. Residues Thr642–Gly663 show a composition bias toward basic residues.

It belongs to the DEAD box helicase family. DDX56/DBP9 subfamily.

The protein localises to the nucleus. Its subcellular location is the nucleolus. The enzyme catalyses ATP + H2O = ADP + phosphate + H(+). ATP-binding RNA helicase involved in the biogenesis of 60S ribosomal subunits and is required for the normal formation of 25S and 5.8S rRNAs. This is ATP-dependent RNA helicase dbp-9 (dbp-9) from Neurospora crassa (strain ATCC 24698 / 74-OR23-1A / CBS 708.71 / DSM 1257 / FGSC 987).